The primary structure comprises 421 residues: Na(+)/H(+) antiporter NhaA 1 (421 aa).

11 consecutive transmembrane segments (helical) span residues Ser-48 to Trp-68, Leu-93 to Ile-113, Ser-129 to Val-149, Ala-157 to Leu-177, Val-187 to Phe-207, Leu-215 to Val-235, Leu-253 to Gly-273, Phe-299 to Leu-319, Val-326 to Val-346, Gly-364 to Phe-384, and Ala-392 to Leu-412.

The protein belongs to the NhaA Na(+)/H(+) (TC 2.A.33) antiporter family.

The protein localises to the cell membrane. It catalyses the reaction Na(+)(in) + 2 H(+)(out) = Na(+)(out) + 2 H(+)(in). Na(+)/H(+) antiporter that extrudes sodium in exchange for external protons. This Deinococcus geothermalis (strain DSM 11300 / CIP 105573 / AG-3a) protein is Na(+)/H(+) antiporter NhaA 1.